Here is a 74-residue protein sequence, read N- to C-terminus: uncharacterized protein (74 aa).

Residues 7-26 (IHLYVMASAMSSSPIFFFFQ) traverse the membrane as a helical segment.

It is found in the membrane. This is an uncharacterized protein from Homo sapiens (Human).